A 427-amino-acid chain; its full sequence is Glutamate-1-semialdehyde 2,1-aminomutase (427 aa).

Position 265 is an N6-(pyridoxal phosphate)lysine (Lys265).

It belongs to the class-III pyridoxal-phosphate-dependent aminotransferase family. HemL subfamily. As to quaternary structure, homodimer. Pyridoxal 5'-phosphate serves as cofactor.

It localises to the cytoplasm. The catalysed reaction is (S)-4-amino-5-oxopentanoate = 5-aminolevulinate. It participates in porphyrin-containing compound metabolism; protoporphyrin-IX biosynthesis; 5-aminolevulinate from L-glutamyl-tRNA(Glu): step 2/2. This chain is Glutamate-1-semialdehyde 2,1-aminomutase, found in Burkholderia pseudomallei (strain 668).